The primary structure comprises 262 residues: Indole-3-glycerol phosphate synthase (262 aa).

This sequence belongs to the TrpC family.

It carries out the reaction 1-(2-carboxyphenylamino)-1-deoxy-D-ribulose 5-phosphate + H(+) = (1S,2R)-1-C-(indol-3-yl)glycerol 3-phosphate + CO2 + H2O. It functions in the pathway amino-acid biosynthesis; L-tryptophan biosynthesis; L-tryptophan from chorismate: step 4/5. In Nitratiruptor sp. (strain SB155-2), this protein is Indole-3-glycerol phosphate synthase.